The chain runs to 556 residues: Urocanate hydratase (556 aa).

NAD(+)-binding positions include 52 to 53 (GG), Q130, 176 to 178 (GMG), E196, R201, 242 to 243 (NA), 263 to 267 (QTSAH), 273 to 274 (YL), and Y322. The active site involves C410. G492 contributes to the NAD(+) binding site.

Belongs to the urocanase family. NAD(+) is required as a cofactor.

It is found in the cytoplasm. It carries out the reaction 4-imidazolone-5-propanoate = trans-urocanate + H2O. It functions in the pathway amino-acid degradation; L-histidine degradation into L-glutamate; N-formimidoyl-L-glutamate from L-histidine: step 2/3. Its function is as follows. Catalyzes the conversion of urocanate to 4-imidazolone-5-propionate. The protein is Urocanate hydratase of Shewanella piezotolerans (strain WP3 / JCM 13877).